The sequence spans 117 residues: Hainantoxin-XV-4 (117 aa).

The N-terminal stretch at 1-20 (MKLCAVIIASLLVCVAVASS) is a signal peptide. Positions 20–55 (SSDNQKEFAQEKEMTREETQSLGEHEKDDEVTGSEE) are disordered. The propeptide occupies 21 to 56 (SDNQKEFAQEKEMTREETQSLGEHEKDDEVTGSEER). Over residues 23 to 55 (NQKEFAQEKEMTREETQSLGEHEKDDEVTGSEE) the composition is skewed to basic and acidic residues. 4 disulfides stabilise this stretch: Cys-58/Cys-72, Cys-65/Cys-78, Cys-69/Cys-115, and Cys-71/Cys-91.

It belongs to the neurotoxin 03 (Tx2) family. 02 subfamily. HNTX-XV sub-subfamily. In terms of tissue distribution, expressed by the venom gland.

Its subcellular location is the secreted. Putative ion channel inhibitor. The chain is Hainantoxin-XV-4 from Cyriopagopus hainanus (Chinese bird spider).